A 403-amino-acid polypeptide reads, in one-letter code: Serine/threonine transporter SstT (403 aa).

The next 9 helical transmembrane spans lie at valine 14 to isoleucine 34, valine 44 to serine 64, isoleucine 79 to methionine 99, alanine 138 to leucine 158, glycine 175 to valine 195, leucine 214 to phenylalanine 234, methionine 295 to isoleucine 315, valine 327 to isoleucine 347, and leucine 353 to valine 373.

Belongs to the dicarboxylate/amino acid:cation symporter (DAACS) (TC 2.A.23) family.

Its subcellular location is the cell inner membrane. It carries out the reaction L-serine(in) + Na(+)(in) = L-serine(out) + Na(+)(out). It catalyses the reaction L-threonine(in) + Na(+)(in) = L-threonine(out) + Na(+)(out). Its function is as follows. Involved in the import of serine and threonine into the cell, with the concomitant import of sodium (symport system). In Pseudomonas putida (strain ATCC 700007 / DSM 6899 / JCM 31910 / BCRC 17059 / LMG 24140 / F1), this protein is Serine/threonine transporter SstT.